A 175-amino-acid polypeptide reads, in one-letter code: MPRPDKAAVVAELKEEFQTSSGAVLTEYRGLTVAQLTELRRSLGQNARFRVAKNTLTKIAAKEAGVTDSEVLDLLKGPSAIAFVKGDVVEAAKGLRDFAKENAALVIKGGLIDGKPMTPEEITKLADLESREVLLSKLAGAFKAKQSQAAAVFQALPSKAVRLVQALADKRGESQ.

It belongs to the universal ribosomal protein uL10 family. As to quaternary structure, part of the ribosomal stalk of the 50S ribosomal subunit. The N-terminus interacts with L11 and the large rRNA to form the base of the stalk. The C-terminus forms an elongated spine to which L12 dimers bind in a sequential fashion forming a multimeric L10(L12)X complex.

Forms part of the ribosomal stalk, playing a central role in the interaction of the ribosome with GTP-bound translation factors. The protein is Large ribosomal subunit protein uL10 of Thermobifida fusca (strain YX).